The following is a 217-amino-acid chain: MOB kinase activator 3A (217 aa).

Zn(2+) contacts are provided by Cys-83, Cys-88, His-165, and His-170.

The protein belongs to the MOB1/phocein family.

May regulate the activity of kinases. The sequence is that of MOB kinase activator 3A (MOB3A) from Homo sapiens (Human).